A 677-amino-acid polypeptide reads, in one-letter code: Envelope glycoprotein (677 aa).

Residues 1–33 (MGSGYQLLQLPRERFRKTSFLVWVIILFQRAIS) form the signal peptide. Residues 34–651 (MPLGIVTNST…DLNLWTGWRQ (618 aa)) lie on the Extracellular side of the membrane. A glycan (N-linked (GlcNAc...) asparagine; by host) is linked at asparagine 41. 5 disulfides stabilise this stretch: cysteine 54/cysteine 610, cysteine 109/cysteine 136, cysteine 122/cysteine 148, cysteine 512/cysteine 557, and cysteine 602/cysteine 609. The tract at residues 55 to 202 (RDKLSSTSQL…HFWKATPAHE (148 aa)) is receptor-binding. N-linked (GlcNAc...) asparagine; by host glycosylation is found at asparagine 205, asparagine 239, asparagine 258, asparagine 269, asparagine 297, asparagine 317, asparagine 318, asparagine 339, asparagine 406, asparagine 420, asparagine 435, and asparagine 463. A mucin-like region region spans residues 306–486 (NLHFQILSTH…PSQPGLTINT (181 aa)). Positions 315–326 (HTNNSSDQSPAG) are enriched in polar residues. Disordered regions lie at residues 315–349 (HTNN…TDSP), 370–483 (NGET…PGLT), and 489–508 (KVAD…RQNT). 3 stretches are compositionally biased toward polar residues: residues 370–421 (NGET…ASNE), 428–445 (MNSI…QTKA), and 458–472 (PQET…TSPG). The interval 525-540 (GAAAGLAWIPYFGPAA) is fusion peptide. Residues 555–596 (LICGLRQLANETTQALQLFLRATTELRTYSLLNRKAIDFLLQ) are a coiled coil. Asparagine 564 is a glycosylation site (N-linked (GlcNAc...) asparagine; by host). Residues 616–635 (WTKNITDEINQIKHDFIDNP) adopt a coiled-coil conformation. Asparagine 619 carries an N-linked (GlcNAc...) asparagine; by host glycan. Residues 652–672 (WIPAGIGIIGVIIAIIALLCI) form a helical membrane-spanning segment. 2 S-palmitoyl cysteine; by host lipidation sites follow: cysteine 671 and cysteine 673. The Cytoplasmic portion of the chain corresponds to 673–677 (CKILC).

The protein belongs to the filoviruses glycoprotein family. Homotrimer; each monomer consists of a GP1 and a GP2 subunit linked by disulfide bonds. The resulting peplomers (GP1,2) protrude from the virus surface as spikes. Interacts with host integrin alpha-V/ITGAV. Interacts with host CLEC10A. Binds also to host CD209 and CLEC4M/DC-SIGN(R). Interacts with host FOLR1. Interacts with BST2; this interaction inhibits the antiviral effect of BST2 and this allows viral release from infected cells. Interacts with host FCN1; this interaction enhances viral entry. Interacts with host TLR4; this interaction induces cell death in T-lymphocytes or proinflammatory cytokines and SOCS1 production in monocytes. As to quaternary structure, interacts with host entry receptor NPC1. In terms of assembly, GP1 and GP2delta are part of GP1,2delta soluble complexes released by ectodomain shedding. The signal peptide region modulates GP's high mannose glycosylation, thereby determining the efficiency of the interactions with DC-SIGN(R). Post-translationally, N-glycosylated. In terms of processing, O-glycosylated in the mucin-like region. Palmitoylation of GP2 is not required for its function. Post-translationally, specific enzymatic cleavages in vivo yield mature proteins. The precursor is processed into GP1 and GP2 by host cell furin in the trans Golgi, and maybe by other host proteases, to yield the mature GP1 and GP2 proteins. The cleavage site corresponds to the furin optimal cleavage sequence [KR]-X-[KR]-R. This cleavage does not seem to be required for function. After the internalization of the virus into cell endosomes, GP1 C-terminus is removed by the endosomal proteases cathepsin B, cathepsin L, or both, leaving a 19-kDa N-terminal fragment which is further digested by cathepsin B. Proteolytic processing of GP1,2 by host ADAM17 can remove the transmembrane anchor of GP2 and leads to shedding of complexes consisting in GP1 and truncated GP2 (GP1,2delta).

It localises to the virion membrane. Its subcellular location is the host cell membrane. It is found in the secreted. Its function is as follows. Trimeric GP1,2 complexes form the virion surface spikes and mediate the viral entry processes, with GP1 acting as the receptor-binding subunit and GP2 as the membrane fusion subunit. At later times of infection, down-regulates the expression of various host cell surface molecules that are essential for immune surveillance and cell adhesion. Down-modulates several integrins including ITGA1, ITGA2, ITGA3, ITGA4, ITGA5, ITGA6, ITGAV and ITGB1. This decrease in cell adhesion molecules may lead to cell detachment, contributing to the disruption of blood vessel integrity and hemorrhages developed during infection (cytotoxicity). Interacts with host TLR4 and thereby stimulates the differentiation and activation of monocytes leading to bystander death of T-lymphocytes. Down-regulates as well the function of host natural killer cells. Counteracts the antiviral effect of host BST2/tetherin that restricts release of progeny virions from infected cells. However, cooperates with VP40 and host BST2 to activate canonical NF-kappa-B pathway in a manner dependent on neddylation. Functions as a decoy for anti-GP1,2 antibodies thereby contributing to viral immune evasion. Interacts and activates host macrophages and dendritic cells inducing up-regulation of cytokine transcription. This effect is mediated throught activation of host TLR4. Functionally, responsible for binding to the receptor(s) on target cells. Interacts with CD209/DC-SIGN and CLEC4M/DC-SIGNR which act as cofactors for virus entry into dendritic cells (DCs) and endothelial cells. Binding to the macrophage specific lectin CLEC10A also seems to enhance virus infectivity. Interaction with FOLR1/folate receptor alpha may be a cofactor for virus entry in some cell types, although results are contradictory. Members of the Tyro3 receptor tyrosine kinase family also seem to be cell entry factors in filovirus infection. Once attached, the virions are internalized through clathrin-dependent endocytosis and/or macropinocytosis. After internalization of the virus into the endosomes of the host cell, proteolysis of GP1 by two cysteine proteases, CTSB/cathepsin B and CTSL/cathepsin L removes the glycan cap and allows GP1 binding to the host entry receptor NPC1. NPC1-binding, Ca(2+) and acidic pH induce a conformational change of GP2, which unmasks its fusion peptide and permit membranes fusion. In terms of biological role, acts as a class I viral fusion protein. Under the current model, the protein has at least 3 conformational states: pre-fusion native state, pre-hairpin intermediate state, and post-fusion hairpin state. During viral and target cell membrane fusion, the coiled coil regions (heptad repeats) assume a trimer-of-hairpins structure, positioning the fusion peptide in close proximity to the C-terminal region of the ectodomain. The formation of this structure appears to drive apposition and subsequent fusion of viral and target cell membranes. Responsible for penetration of the virus into the cell cytoplasm by mediating the fusion of the membrane of the endocytosed virus particle with the endosomal membrane. Low pH in endosomes induces an irreversible conformational change in GP2, releasing the fusion hydrophobic peptide. The polypeptide is Envelope glycoprotein (GP) (Reston ebolavirus (strain Philippines-96) (REBOV)).